The chain runs to 90 residues: Evasin P458 (90 aa).

The signal sequence occupies residues 1-24 (MEVKTFAFLQIAVLIAFSLHSASA). 3 disulfide bridges follow: C44–C63, C48–C65, and C59–C76. The N-linked (GlcNAc...) asparagine glycan is linked to N47.

The protein resides in the secreted. In terms of biological role, salivary chemokine-binding protein which binds to host chemokines CXCL1, CXCL2, CXCL3, CXCL5, CXCL6 and CXCL13. The chain is Evasin P458 from Ixodes ricinus (Common tick).